A 114-amino-acid polypeptide reads, in one-letter code: Large ribosomal subunit protein bL20 (114 aa).

The protein belongs to the bacterial ribosomal protein bL20 family.

Functionally, binds directly to 23S ribosomal RNA and is necessary for the in vitro assembly process of the 50S ribosomal subunit. It is not involved in the protein synthesizing functions of that subunit. This is Large ribosomal subunit protein bL20 from Anaeromyxobacter dehalogenans (strain 2CP-C).